A 250-amino-acid polypeptide reads, in one-letter code: Beta-crystallin B1 (250 aa).

A disordered region spans residues 1–47; sequence MSQVAKAAATTAVNPGPDGKGKGTPSTGTAPAPGPTPVPASVPRPAA. Residue Ser2 is modified to N-acetylserine. Residues 2–56 form an N-terminal arm region; that stretch reads SQVAKAAATTAVNPGPDGKGKGTPSTGTAPAPGPTPVPASVPRPAAKVGELPPGS. The segment covering 32–42 has biased composition (pro residues); the sequence is APGPTPVPASV. Beta/gamma crystallin 'Greek key' domains are found at residues 57 to 96 and 97 to 141; these read YRLV…IVLS and GPWV…RPIR. The connecting peptide stretch occupies residues 142–146; it reads MDSQE. Beta/gamma crystallin 'Greek key' domains follow at residues 147-188 and 189-231; these read HKIC…TVSS and GTWV…RRLR. The C-terminal arm stretch occupies residues 233–250; it reads RQWHQEGCFPVLTAEPPK.

It belongs to the beta/gamma-crystallin family. In terms of assembly, homo/heterodimer, or complexes of higher-order. The structure of beta-crystallin oligomers seems to be stabilized through interactions between the N-terminal arms. Post-translationally, specific cleavages in the N-terminal arm occur during lens maturation and give rise to truncated forms, leading to impaired oligomerization and protein insolubilization. The protease responsible for this partial degradation could be calpain II.

Its function is as follows. Crystallins are the dominant structural components of the vertebrate eye lens. This is Beta-crystallin B1 (Crybb1) from Rattus norvegicus (Rat).